The following is a 367-amino-acid chain: Dihydroxyacetone phosphate transaminase Cj1437c (367 aa).

K219 carries the N6-(pyridoxal phosphate)lysine modification.

It belongs to the class-II pyridoxal-phosphate-dependent aminotransferase family. Requires pyridoxal 5'-phosphate as cofactor.

It carries out the reaction dihydroxyacetone phosphate + L-glutamate = (S)-serinol phosphate + 2-oxoglutarate. It functions in the pathway capsule biogenesis; capsule polysaccharide biosynthesis. Its function is as follows. Pyridoxal phosphate (PLP)-dependent transaminase involved in the biosynthesis of amidated D-glucuronic acid structures found on the capsular polysaccharide (CPS) of C.jejuni. Catalyzes the transamination of dihydroxyacetone phosphate (DHAP) to (S)-serinol phosphate in the presence of L-glutamate. Less active with L-aspartate. No activity with dihydroxyacetone or L-alanine. This chain is Dihydroxyacetone phosphate transaminase Cj1437c, found in Campylobacter jejuni subsp. jejuni serotype O:2 (strain ATCC 700819 / NCTC 11168).